Reading from the N-terminus, the 232-residue chain is Fibrillarin-like rRNA/tRNA 2'-O-methyltransferase (232 aa).

Residues 89 to 90 (TT), 108 to 109 (EF), 133 to 134 (DA), and 153 to 156 (DIAQ) contribute to the S-adenosyl-L-methionine site.

Belongs to the methyltransferase superfamily. Fibrillarin family. Interacts with nop5. Component of box C/D small ribonucleoprotein (sRNP) particles that contain rpl7ae, FlpA and nop5, plus a guide RNA.

Functionally, involved in pre-rRNA and tRNA processing. Utilizes the methyl donor S-adenosyl-L-methionine to catalyze the site-specific 2'-hydroxyl methylation of ribose moieties in rRNA and tRNA. Site specificity is provided by a guide RNA that base pairs with the substrate. Methylation occurs at a characteristic distance from the sequence involved in base pairing with the guide RNA. The protein is Fibrillarin-like rRNA/tRNA 2'-O-methyltransferase of Saccharolobus islandicus (strain M.16.27) (Sulfolobus islandicus).